The sequence spans 361 residues: MVEAQSWTTRRMSNPRFDAAATAAPTIVDIPGTPPHSSASSPLKPFFLSSPTVSPTILTAAIIAAWFGSNIGVLLLNKYLLFYYGFRYPIFLTMTHMLSCAAYSSAVINIAGIVPRQHILSRRQFLKILSLSAIFCLSVVCGNTSLRYIPVSFNQAIGATTPFFTAVFSFLITCKTESTEVYLALLPVVSGIVLASNSEPSFHLFGFLICVASTAGRALKSVVQGIILTSESEKLHSMNLLLYMAPMAACILLPFTLYIEGNVLRVLIEKARTDPLIIFLLAGNATVAYLVNLTNFLVTKHTSALTLQVLGNGKAAVAAGVSVLIFRNPVTVMGIAGFGVTIMGVVLYSEARKRSKLLNQK.

The residue at position 2 (V2) is an N-acetylvaline. The next 9 helical transmembrane spans lie at T56 to L76, I90 to I110, F125 to S145, F153 to T173, I192 to A212, L240 to E260, L276 to F296, T306 to F326, and P329 to S349. The EamA domain maps to P89–S196.

Belongs to the TPT transporter family. TPT (TC 2.A.7.9) subfamily.

It localises to the membrane. In Arabidopsis thaliana (Mouse-ear cress), this protein is Probable sugar phosphate/phosphate translocator At1g12500.